The primary structure comprises 236 residues: Sensory rhodopsin I (236 aa).

The next 7 helical transmembrane spans lie at 6–26 (VVYGITAAGFAVGVAIVGFLY), 37–57 (ILAALALIPGVAGISYVAMVF), 74–94 (YLDWVVTTPLLVGFIGYTAGA), 98–118 (AIFGVMAADALMILAGVGAVV), 126–146 (ALFGVSAVFHISLFAYLYLIF), 167–187 (VGLLWIAYPLVWLAGPEGLGF), and 192–212 (GVSITYAFLDLLAKVPYVYFF). Lys-205 is modified (N6-(retinylidene)lysine).

This sequence belongs to the archaeal/bacterial/fungal opsin family. Interacts with Htr1. In terms of processing, the covalent binding of retinal to the apoprotein, bacterioopsin, generates bacteriorhodopsin.

It is found in the membrane. Its function is as follows. Photoattractant rhodopsin. This is Sensory rhodopsin I (sop1) from Haloarcula marismortui (strain ATCC 43049 / DSM 3752 / JCM 8966 / VKM B-1809) (Halobacterium marismortui).